We begin with the raw amino-acid sequence, 167 residues long: UPF0179 protein Pars_2336 (167 aa).

This sequence belongs to the UPF0179 family.

The protein is UPF0179 protein Pars_2336 of Pyrobaculum arsenaticum (strain DSM 13514 / JCM 11321 / PZ6).